The primary structure comprises 369 residues: Cytochrome P450 monooxygenase apf8 (369 aa).

Cys303 provides a ligand contact to heme.

The protein belongs to the cytochrome P450 family. The cofactor is heme.

Its pathway is secondary metabolite biosynthesis. In terms of biological role, cytochrome P450 monooxygenase; part of the gene cluster that mediates the biosynthesis of the cyclic tetrapeptide apicidin F (APF). The non-ribosomal peptide synthetase apf1 incorporates four different amino acids to produce apicidin F: L-phenylalanine, D-pipecolic acid (D-pip), N-methoxy-L-tryptophan and L-2-aminooctanedioic acid. L-Phenylalanine is the only proteinogenic amino acid directly used by apf1. The 3 other apf1 substrates are non-proteinogenic and have to be modified by other enzymes of the cluster. Lysine is converted to delta-1-pyrroline-5-carboxylate (P5C) which is reduced to L-pipecolic acid (L-pip) by apf3. L-pip is epimerized to D-pip, probably by apf1 activity, prior to incorporation. L-Tryptophan is N-oxidyzed by one of the cytochrome P450 monooxygenases (apf7 or apf8), and further methylated at the hydroxy group by the O-methyltransferase apf6 to yield N-methoxy-L-tryptophan. The synthesis of the fourth apf1 substrate is more complex. The fatty acid synthase apf5 is involved in the synthesis of the octanoic acid backbone of L-2-aminooctanedioic acid by fixing one acetyl-CoA unit and three malonyl-CoA units. Then one of the cytochrome P450 monooxygenases (apf7 or apf8) may oxidize this backbone to 2-oxooctanoic acid. The aminotransferase apf4 is predicted to catalyze the exchange of the keto group with an amino group. The next step would be the oxidation of 2-aminooctanoic acid by one of the cytochrome P450 monooxygenases (apf7 or apf8). The last step is the oxidation of 2-amino-8-hydroxyoctanoic acid to 2-aminooctanedioic acid is catalyzed by the FAD-dependent monooxygenase apf9. In Gibberella fujikuroi (strain CBS 195.34 / IMI 58289 / NRRL A-6831) (Bakanae and foot rot disease fungus), this protein is Cytochrome P450 monooxygenase apf8.